Here is a 60-residue protein sequence, read N- to C-terminus: Large ribosomal subunit protein uL30 (60 aa).

The protein belongs to the universal ribosomal protein uL30 family. In terms of assembly, part of the 50S ribosomal subunit.

The chain is Large ribosomal subunit protein uL30 from Clavibacter michiganensis subsp. michiganensis (strain NCPPB 382).